Here is a 102-residue protein sequence, read N- to C-terminus: NADH-quinone oxidoreductase subunit K 1 (102 aa).

Transmembrane regions (helical) follow at residues 5–25 (LYEVLILASILFAMGLACVVA), 30–50 (VIMMLIGIEIMLNAVMLTFVG), and 62–82 (VFSLMIMALTSAEVSLALAMV).

Belongs to the complex I subunit 4L family. In terms of assembly, NDH-1 is composed of 14 different subunits. Subunits NuoA, H, J, K, L, M, N constitute the membrane sector of the complex.

It is found in the cell inner membrane. The catalysed reaction is a quinone + NADH + 5 H(+)(in) = a quinol + NAD(+) + 4 H(+)(out). NDH-1 shuttles electrons from NADH, via FMN and iron-sulfur (Fe-S) centers, to quinones in the respiratory chain. The immediate electron acceptor for the enzyme in this species is believed to be ubiquinone. Couples the redox reaction to proton translocation (for every two electrons transferred, four hydrogen ions are translocated across the cytoplasmic membrane), and thus conserves the redox energy in a proton gradient. This is NADH-quinone oxidoreductase subunit K 1 from Citrifermentans bemidjiense (strain ATCC BAA-1014 / DSM 16622 / JCM 12645 / Bem) (Geobacter bemidjiensis).